The sequence spans 408 residues: Arginine biosynthesis bifunctional protein ArgJ (408 aa).

Substrate-binding residues include T156, K182, T193, E279, N403, and S408. The active-site Nucleophile is the T193.

It belongs to the ArgJ family. In terms of assembly, heterotetramer of two alpha and two beta chains.

The protein resides in the cytoplasm. The enzyme catalyses N(2)-acetyl-L-ornithine + L-glutamate = N-acetyl-L-glutamate + L-ornithine. It catalyses the reaction L-glutamate + acetyl-CoA = N-acetyl-L-glutamate + CoA + H(+). It functions in the pathway amino-acid biosynthesis; L-arginine biosynthesis; L-ornithine and N-acetyl-L-glutamate from L-glutamate and N(2)-acetyl-L-ornithine (cyclic): step 1/1. Its pathway is amino-acid biosynthesis; L-arginine biosynthesis; N(2)-acetyl-L-ornithine from L-glutamate: step 1/4. Catalyzes two activities which are involved in the cyclic version of arginine biosynthesis: the synthesis of N-acetylglutamate from glutamate and acetyl-CoA as the acetyl donor, and of ornithine by transacetylation between N(2)-acetylornithine and glutamate. This chain is Arginine biosynthesis bifunctional protein ArgJ, found in Bordetella bronchiseptica (strain ATCC BAA-588 / NCTC 13252 / RB50) (Alcaligenes bronchisepticus).